Here is a 298-residue protein sequence, read N- to C-terminus: MQTQRLRIAIQKKGRLSEECQGLLKKCGVKFNIMGERLVVHSENMPIDLLLVRDDDIPGLIMDGVVDLGFIGENVLEEVRLERKATGDACQFETLSRLDFGGCRLSIAIDKDEKYNGPQDLAGKRIATTYPQLLKAYMDRQGVPFSTCMLTGSVEVAPRAGLADAIADLVSTGATLEANGLKEAEVIFQSKATLIQRSGEFAQDKQALIEKLLTRMQGVQQAKESKYIMLHAPVDKLEQIKALLPGAEDPTVLPLSAEKQRVAVHLVSTENLFWETMEQLKELGASSILVLPIEKMME.

The protein belongs to the ATP phosphoribosyltransferase family. Long subfamily. Mg(2+) is required as a cofactor.

Its subcellular location is the cytoplasm. The enzyme catalyses 1-(5-phospho-beta-D-ribosyl)-ATP + diphosphate = 5-phospho-alpha-D-ribose 1-diphosphate + ATP. Its pathway is amino-acid biosynthesis; L-histidine biosynthesis; L-histidine from 5-phospho-alpha-D-ribose 1-diphosphate: step 1/9. Feedback inhibited by histidine. Functionally, catalyzes the condensation of ATP and 5-phosphoribose 1-diphosphate to form N'-(5'-phosphoribosyl)-ATP (PR-ATP). Has a crucial role in the pathway because the rate of histidine biosynthesis seems to be controlled primarily by regulation of HisG enzymatic activity. This chain is ATP phosphoribosyltransferase, found in Vibrio vulnificus (strain CMCP6).